Reading from the N-terminus, the 121-residue chain is uncharacterized protein (121 aa).

2 disordered regions span residues 24–43 and 100–121; these read SGRT…GRGG and DHEN…TDQR.

This is an uncharacterized protein from Homo sapiens (Human).